A 332-amino-acid polypeptide reads, in one-letter code: Protein pelota homolog (332 aa).

The protein belongs to the eukaryotic release factor 1 family. Pelota subfamily. Monomer. A divalent metal cation is required as a cofactor.

The protein resides in the cytoplasm. Functionally, may function in recognizing stalled ribosomes, interact with stem-loop structures in stalled mRNA molecules, and effect endonucleolytic cleavage of the mRNA. May play a role in the release non-functional ribosomes and degradation of damaged mRNAs. Has endoribonuclease activity. This is Protein pelota homolog from Pyrobaculum aerophilum (strain ATCC 51768 / DSM 7523 / JCM 9630 / CIP 104966 / NBRC 100827 / IM2).